Consider the following 222-residue polypeptide: ATP-dependent dethiobiotin synthetase BioD (222 aa).

12 to 17 contributes to the ATP binding site; the sequence is DVGKTF. Residue Thr-16 coordinates Mg(2+). Lys-37 is an active-site residue. Residue Ser-41 coordinates substrate. Residues Asp-54 and 113–116 contribute to the ATP site; that span reads EGAG. Mg(2+)-binding residues include Asp-54 and Glu-113.

Belongs to the dethiobiotin synthetase family. In terms of assembly, homodimer. Requires Mg(2+) as cofactor.

Its subcellular location is the cytoplasm. The catalysed reaction is (7R,8S)-7,8-diammoniononanoate + CO2 + ATP = (4R,5S)-dethiobiotin + ADP + phosphate + 3 H(+). Its pathway is cofactor biosynthesis; biotin biosynthesis; biotin from 7,8-diaminononanoate: step 1/2. Its function is as follows. Catalyzes a mechanistically unusual reaction, the ATP-dependent insertion of CO2 between the N7 and N8 nitrogen atoms of 7,8-diaminopelargonic acid (DAPA, also called 7,8-diammoniononanoate) to form a ureido ring. This Anoxybacillus flavithermus (strain DSM 21510 / WK1) protein is ATP-dependent dethiobiotin synthetase BioD.